Consider the following 234-residue polypeptide: Interleukin-34 (234 aa).

A signal peptide spans 1–20 (MPWGLAWLYCLGILLDVALG). Asn-99 carries N-linked (GlcNAc...) asparagine glycosylation. The disordered stretch occupies residues 215-234 (PRQPPTSLPRSPSSNHGPLP). Polar residues predominate over residues 222-234 (LPRSPSSNHGPLP).

The protein belongs to the IL-34 family. Homodimer. Interacts with CSF1R.

The protein resides in the secreted. Functionally, cytokine that promotes the proliferation, survival and differentiation of monocytes and macrophages. Promotes the release of pro-inflammatory chemokines, and thereby plays an important role in innate immunity and in inflammatory processes. Plays an important role in the regulation of osteoclast proliferation and differentiation, and in the regulation of bone resorption. Signaling via CSF1R and its downstream effectors stimulates phosphorylation of MAPK1/ERK2 AND MAPK3/ERK1. In Rattus norvegicus (Rat), this protein is Interleukin-34 (Il34).